The chain runs to 187 residues: MATWGRRRAGPGGRERVALAAGECYIVHEIYNGENAQDQFEYELEQALEAQYKYIVIEPTRIGDETARWISVGNCLHKTAVLSGTACLLTPLALPSEYSHYVSLPAGVLSLACSTLYGISWQFDPCCKYQVEYDAYKLSRLPLHTLTSSTPVVLVRKDDMHRKRLHNTIALAALAYCMKKIYELYSV.

The next 2 helical transmembrane spans lie at T79 to P95 and V102 to I119.

This sequence belongs to the TMEM11 family.

It localises to the mitochondrion inner membrane. Plays a role in mitochondrial morphogenesis. This chain is Transmembrane protein 11-B, mitochondrial (tmem11-b), found in Xenopus laevis (African clawed frog).